Consider the following 98-residue polypeptide: uncharacterized protein (98 aa).

The next 2 membrane-spanning stretches (helical) occupy residues 14 to 34 (FLVI…PVTA) and 41 to 61 (MTGA…ASII).

The protein localises to the cell membrane. This is an uncharacterized protein from Haemophilus influenzae (strain ATCC 51907 / DSM 11121 / KW20 / Rd).